Consider the following 237-residue polypeptide: Flagellar L-ring protein (237 aa).

Positions 1–24 (MNRPGFPRFSVLIASLCGITLLSG) are cleaved as a signal peptide. A lipid anchor (N-palmitoyl cysteine) is attached at cysteine 25. Cysteine 25 carries S-diacylglycerol cysteine lipidation.

This sequence belongs to the FlgH family. The basal body constitutes a major portion of the flagellar organelle and consists of four rings (L,P,S, and M) mounted on a central rod.

It is found in the cell outer membrane. It localises to the bacterial flagellum basal body. In terms of biological role, assembles around the rod to form the L-ring and probably protects the motor/basal body from shearing forces during rotation. This Pseudomonas syringae pv. tomato (strain ATCC BAA-871 / DC3000) protein is Flagellar L-ring protein.